The primary structure comprises 385 residues: S-adenosylmethionine synthase (385 aa).

Residue histidine 15 participates in ATP binding. Aspartate 17 contributes to the Mg(2+) binding site. Glutamate 43 serves as a coordination point for K(+). L-methionine is bound by residues glutamate 56 and glutamine 99. Positions 99–109 (QSPDINQGVDR) are flexible loop. ATP is bound by residues 164–166 (DAK), 230–231 (RF), aspartate 239, 245–246 (RK), alanine 262, and lysine 266. Aspartate 239 serves as a coordination point for L-methionine. L-methionine is bound at residue lysine 270.

The protein belongs to the AdoMet synthase family. As to quaternary structure, homotetramer; dimer of dimers. Requires Mg(2+) as cofactor. The cofactor is K(+).

It is found in the cytoplasm. The catalysed reaction is L-methionine + ATP + H2O = S-adenosyl-L-methionine + phosphate + diphosphate. It functions in the pathway amino-acid biosynthesis; S-adenosyl-L-methionine biosynthesis; S-adenosyl-L-methionine from L-methionine: step 1/1. In terms of biological role, catalyzes the formation of S-adenosylmethionine (AdoMet) from methionine and ATP. The overall synthetic reaction is composed of two sequential steps, AdoMet formation and the subsequent tripolyphosphate hydrolysis which occurs prior to release of AdoMet from the enzyme. This Hamiltonella defensa subsp. Acyrthosiphon pisum (strain 5AT) protein is S-adenosylmethionine synthase.